The chain runs to 531 residues: MADTGGRPEVSLATVRSPGHPAASTTAAAAADLGHADTGQEKPTVESAQPANGAAPMGECGTEYRGLPDGDAGGPMPSSARTVSMIPLIFLIFYEVSGGPFGIEDSVGAAGPLLAIIGFLVLPVIWSIPEALITAELGAMFPENGGYVVWVASALGPYWGFQQGWMKWLSGVIDNALYPVLFLDYLKSGVPALGGGAPRAFAVVGLTAVLTLLNYRGLTVVGWVAICLGVFSLLPFFVMGLIALPKLRPARWLVIDLHNVDWNLYLNTLFWNLNYWDSISTLAGEVKNPGKTLPKALFYAVIFVVVAYLYPLLAGTGAVPLDRGQWTDGYFADIAKLLGGAWLMWWVQSAAALSNMGMFVAEMSSDSYQLLGMAERGMLPSFFAARSRYGTPLAGILFSASGVLLLSMMSFQEIVAAENFLYCFGMLLEFVAFILHRVRRPDAARPYRVPLGTAGCVAMLVPPTALIAVVLALSTLKVAVVSLGAVAMGLVLQPALRFVEKKRWLRFSVNPDLPEIGVIRPPAAPDEPLVP.

The disordered stretch occupies residues 1–76 (MADTGGRPEV…LPDGDAGGPM (76 aa)). Low complexity predominate over residues 17-33 (SPGHPAASTTAAAAADL). The segment covering 34-44 (GHADTGQEKPT) has biased composition (basic and acidic residues). The next 12 membrane-spanning stretches (helical) occupy residues 83-103 (VSMIPLIFLIFYEVSGGPFGI), 113-133 (LLAIIGFLVLPVIWSIPEALI), 147-167 (YVVWVASALGPYWGFQQGWMK), 193-213 (LGGGAPRAFAVVGLTAVLTLL), 224-244 (VAICLGVFSLLPFFVMGLIAL), 262-284 (WNLYLNTLFWNLNYWDSISTLAG), 296-316 (ALFYAVIFVVVAYLYPLLAGT), 341-361 (AWLMWWVQSAAALSNMGMFVA), 391-411 (TPLAGILFSASGVLLLSMMSF), 414-434 (IVAAENFLYCFGMLLEFVAFI), 453-473 (TAGCVAMLVPPTALIAVVLAL), and 476-496 (LKVAVVSLGAVAMGLVLQPAL).

The protein belongs to the amino acid-polyamine-organocation (APC) superfamily. Polyamine:cation symporter (PHS) (TC 2.A.3.12) family. As to expression, expressed in seedling roots, leaves, stems, flowers and siliques.

It is found in the cell membrane. In terms of biological role, cell membrane polyamine/proton symporter involved in the polyamine uptake in cells. Possesses high affinity for spermidine and lower affinity for spermine and putrescine. Transports paraquat, a polyamine analog, and thus confers sensitivity to this chemical which is used as a herbicide. The chain is Polyamine transporter PUT1 (PUT1) from Oryza sativa subsp. japonica (Rice).